A 159-amino-acid polypeptide reads, in one-letter code: Ribosomal RNA large subunit methyltransferase H (159 aa).

Residues L76, G108, and 127-132 (FGRLTL) contribute to the S-adenosyl-L-methionine site.

It belongs to the RNA methyltransferase RlmH family. Homodimer.

The protein localises to the cytoplasm. The catalysed reaction is pseudouridine(1915) in 23S rRNA + S-adenosyl-L-methionine = N(3)-methylpseudouridine(1915) in 23S rRNA + S-adenosyl-L-homocysteine + H(+). Specifically methylates the pseudouridine at position 1915 (m3Psi1915) in 23S rRNA. The protein is Ribosomal RNA large subunit methyltransferase H of Streptococcus pneumoniae (strain 70585).